Consider the following 260-residue polypeptide: Thiazole synthase (260 aa).

Lys96 serves as the catalytic Schiff-base intermediate with DXP. 1-deoxy-D-xylulose 5-phosphate-binding positions include Gly157, 184–185 (AG), and 206–207 (NT).

Belongs to the ThiG family. Homotetramer. Forms heterodimers with either ThiH or ThiS.

Its subcellular location is the cytoplasm. The catalysed reaction is [ThiS sulfur-carrier protein]-C-terminal-Gly-aminoethanethioate + 2-iminoacetate + 1-deoxy-D-xylulose 5-phosphate = [ThiS sulfur-carrier protein]-C-terminal Gly-Gly + 2-[(2R,5Z)-2-carboxy-4-methylthiazol-5(2H)-ylidene]ethyl phosphate + 2 H2O + H(+). It participates in cofactor biosynthesis; thiamine diphosphate biosynthesis. Its function is as follows. Catalyzes the rearrangement of 1-deoxy-D-xylulose 5-phosphate (DXP) to produce the thiazole phosphate moiety of thiamine. Sulfur is provided by the thiocarboxylate moiety of the carrier protein ThiS. In vitro, sulfur can be provided by H(2)S. This is Thiazole synthase from Rhodopseudomonas palustris (strain BisB5).